Here is a 287-residue protein sequence, read N- to C-terminus: Putative sugar uptake protein EF_0928 (287 aa).

Transmembrane regions (helical) follow at residues 5 to 27 (IALVPMIAWGSIGLVSGKIGGSA), 32 to 49 (LGMTIGALLFSIVVFFVI), 53 to 71 (LTTATLIVGFISGLFWSLG), 84 to 106 (VSVGLPISTGMQLVVNTVAGAVF), 116 to 134 (FVVGFIALAFLVFGVYLTA), 155 to 177 (IRALIFSTVGYGVYTIIINATGL), 182 to 200 (IILPQSIGMLVGASFFAFK), 207 to 229 (FVWMNMTTGLLWGLGNICMLLTM), 234 to 256 (LAISFSLSQMGIIISTLGGIFLL), and 265 to 284 (MFYVIFGCIFVILGGILLGY).

Belongs to the GRP transporter (TC 2.A.7.5) family.

It localises to the cell membrane. The polypeptide is Putative sugar uptake protein EF_0928 (Enterococcus faecalis (strain ATCC 700802 / V583)).